Reading from the N-terminus, the 591-residue chain is MRGSVIGAERSGQTIMVALVLMVGSFYTGSLFGTNQPIYVSHPSSHSASSKFANKIELTYRRLPLVIPESGMNVCPLEFNEYIPCHNVTYVHQLLPSLNLSRREDLERHCPPLEHRLFCLVPPPNDYKIPIRWPTSRDYVWRSNVNHTHLAQVKGGQNWVHEQGQFWWFPGGGTHFKHGAAEYIQRLGNMMTNETGDLRSAGVVQVLDVGCGVASFAAYLLPLGIQTISFAPKDGHENQIQFALERGIGAMISAVATKQLPYPAASFEMVHCSRCRVDWHTNDGILLKEVHRLLRPNGFFVYSSPPAYRKDKEYPMIWDKLVNLTSAMCWKLISRKVQTAIWIKEEKEVCLKQKAELKLISLCDVEDVLKPSWKVPLKDCVQISGQTEERPSSLAERLSAYPATLRKIGISEDEYTSDTVFWREQVNHYWRLMNVNETEVRNVMDMNAFIGGFAAAMNSYPVWVMNIVPATMNDTLSGIFERGLNGAFHDWCEAFSTYPRTYDLVHSDHVFSHYNKSYGDGCLLEDIMLEMDRIVRPQGFVIIRDEEYIISRIRGLAPKFLWEVETHELENKDKKITESVLFCRKRFWAII.

Topologically, residues 1 to 13 are cytoplasmic; the sequence is MRGSVIGAERSGQ. Residues 14–34 form a helical; Signal-anchor for type II membrane protein membrane-spanning segment; that stretch reads TIMVALVLMVGSFYTGSLFGT. The Lumenal portion of the chain corresponds to 35-591; it reads NQPIYVSHPS…FCRKRFWAII (557 aa). Residues N87, N99, N146, N193, N323, N436, N473, and N515 are each glycosylated (N-linked (GlcNAc...) asparagine).

It belongs to the methyltransferase superfamily.

It is found in the endoplasmic reticulum membrane. This Arabidopsis thaliana (Mouse-ear cress) protein is Probable methyltransferase PMT6.